Consider the following 142-residue polypeptide: Large ribosomal subunit protein uL11 (142 aa).

The protein belongs to the universal ribosomal protein uL11 family. In terms of assembly, part of the ribosomal stalk of the 50S ribosomal subunit. Interacts with L10 and the large rRNA to form the base of the stalk. L10 forms an elongated spine to which L12 dimers bind in a sequential fashion forming a multimeric L10(L12)X complex. Post-translationally, one or more lysine residues are methylated.

In terms of biological role, forms part of the ribosomal stalk which helps the ribosome interact with GTP-bound translation factors. The protein is Large ribosomal subunit protein uL11 of Xylella fastidiosa (strain Temecula1 / ATCC 700964).